Here is a 179-residue protein sequence, read N- to C-terminus: ATP synthase subunit delta (179 aa).

The protein belongs to the ATPase delta chain family. F-type ATPases have 2 components, F(1) - the catalytic core - and F(0) - the membrane proton channel. F(1) has five subunits: alpha(3), beta(3), gamma(1), delta(1), epsilon(1). F(0) has three main subunits: a(1), b(2) and c(10-14). The alpha and beta chains form an alternating ring which encloses part of the gamma chain. F(1) is attached to F(0) by a central stalk formed by the gamma and epsilon chains, while a peripheral stalk is formed by the delta and b chains.

The protein localises to the cell inner membrane. F(1)F(0) ATP synthase produces ATP from ADP in the presence of a proton or sodium gradient. F-type ATPases consist of two structural domains, F(1) containing the extramembraneous catalytic core and F(0) containing the membrane proton channel, linked together by a central stalk and a peripheral stalk. During catalysis, ATP synthesis in the catalytic domain of F(1) is coupled via a rotary mechanism of the central stalk subunits to proton translocation. Functionally, this protein is part of the stalk that links CF(0) to CF(1). It either transmits conformational changes from CF(0) to CF(1) or is implicated in proton conduction. This Chlorobium chlorochromatii (strain CaD3) protein is ATP synthase subunit delta.